A 108-amino-acid polypeptide reads, in one-letter code: Ribulose bisphosphate carboxylase small subunit (108 aa).

The protein belongs to the RuBisCO small chain family. Heterohexadecamer of 8 large and 8 small subunits.

Its function is as follows. RuBisCO catalyzes two reactions: the carboxylation of D-ribulose 1,5-bisphosphate, the primary event in carbon dioxide fixation, as well as the oxidative fragmentation of the pentose substrate. Both reactions occur simultaneously and in competition at the same active site. Although the small subunit is not catalytic it is essential for maximal activity. The sequence is that of Ribulose bisphosphate carboxylase small subunit from Nitrobacter vulgaris.